The sequence spans 490 residues: Sulfate adenylyltransferase (490 aa).

The segment at 1–165 is N-terminal; that stretch reads MTKALLKDLN…LQAVTPIRHF (165 aa). The interval 166–390 is catalytic; it reads DFVEYRYSPA…LRQSYPPKYS (225 aa). Gln-193 lines the sulfate pocket. Residues 193–196 and 287–290 each bind ATP; these read QTRN and GRDH. Residues Thr-194, Arg-195, and Asn-196 contribute to the active site. A sulfate-binding site is contributed by Arg-195. Ala-291 lines the sulfate pocket. Met-329 contributes to the ATP binding site. At Thr-356 the chain carries Phosphothreonine. The required for oligomerization; adenylyl-sulfate kinase-like stretch occupies residues 391–490; that stretch reads QGFVLAVPAT…LSQLSDEGYL (100 aa).

Belongs to the sulfate adenylyltransferase family. In terms of assembly, homohexamer. Dimer of trimers.

Its subcellular location is the cytoplasm. It carries out the reaction sulfate + ATP + H(+) = adenosine 5'-phosphosulfate + diphosphate. It functions in the pathway sulfur metabolism; hydrogen sulfide biosynthesis; sulfite from sulfate: step 1/3. In terms of biological role, catalyzes the first intracellular reaction of sulfate assimilation, forming adenosine-5'-phosphosulfate (APS) from inorganic sulfate and ATP. Plays an important role in sulfate activation as a component of the biosynthesis pathway of sulfur-containing amino acids. The sequence is that of Sulfate adenylyltransferase (sua1) from Schizosaccharomyces pombe (strain 972 / ATCC 24843) (Fission yeast).